A 436-amino-acid polypeptide reads, in one-letter code: NAD(P)-dependent benzaldehyde dehydrogenase (436 aa).

NADP(+)-binding positions include 117-119 (GPF), 143-147 (KPSET), 175-178 (RDEN), 193-194 (GS), 215-216 (EL), Cys-249, and 337-339 (ELF). Active-site residues include Glu-215 and Cys-249.

This sequence belongs to the aldehyde dehydrogenase family.

The enzyme catalyses benzaldehyde + NAD(+) + H2O = benzoate + NADH + 2 H(+). The catalysed reaction is benzaldehyde + NADP(+) + H2O = benzoate + NADPH + 2 H(+). The protein operates within aromatic compound metabolism; (R)-mandelate degradation; benzoate from (R)-mandelate: step 4/4. In terms of biological role, NAD or NADP-dependent benzaldehyde dehydrogenase that catalyzes the conversion of benzaldehyde into benzoate in the (R)-mandelate degradation pathway. This is NAD(P)-dependent benzaldehyde dehydrogenase (mdlD) from Pseudomonas putida (Arthrobacter siderocapsulatus).